A 390-amino-acid chain; its full sequence is Heat stress transcription factor B-2b (390 aa).

Positions Thr-165 to Asn-212 are disordered. Residues Gly-206–Leu-237 adopt a coiled-coil conformation. Residues Leu-215–Ala-244 form a hydrophobic repeat HR-A/B region. A Nuclear localization signal motif is present at residues Arg-318 to Arg-322. The segment at Arg-322–Arg-363 is disordered. Residues His-323 to Gln-350 are compositionally biased toward basic and acidic residues.

This sequence belongs to the HSF family. Class B subfamily. In terms of assembly, homotrimer. Post-translationally, exhibits temperature-dependent phosphorylation.

It is found in the nucleus. Functionally, transcriptional regulator that specifically binds DNA of heat shock promoter elements (HSE). The sequence is that of Heat stress transcription factor B-2b (HSFB2B) from Oryza sativa subsp. japonica (Rice).